The following is a 278-amino-acid chain: Protoheme IX farnesyltransferase (278 aa).

Helical transmembrane passes span 12-32 (VIWL…QTVD), 33-53 (WSKL…SAAF), 83-103 (ALVY…YLLG), 105-125 (LPGL…TIWL), 130-150 (WLNI…GYAL), 157-177 (LPAV…IWAL), 204-224 (VIIS…YLAF), 228-248 (LLGL…SILA), and 257-277 (MWKM…ALVF).

This sequence belongs to the UbiA prenyltransferase family. Protoheme IX farnesyltransferase subfamily.

Its subcellular location is the cell membrane. The enzyme catalyses heme b + (2E,6E)-farnesyl diphosphate + H2O = Fe(II)-heme o + diphosphate. The protein operates within porphyrin-containing compound metabolism; heme O biosynthesis; heme O from protoheme: step 1/1. Converts heme B (protoheme IX) to heme O by substitution of the vinyl group on carbon 2 of heme B porphyrin ring with a hydroxyethyl farnesyl side group. This is Protoheme IX farnesyltransferase from Pyrobaculum islandicum (strain DSM 4184 / JCM 9189 / GEO3).